Consider the following 72-residue polypeptide: Keratin-associated protein 19-5 (72 aa).

Belongs to the KRTAP type 19 family. In terms of assembly, interacts with hair keratins.

In terms of biological role, in the hair cortex, hair keratin intermediate filaments are embedded in an interfilamentous matrix, consisting of hair keratin-associated proteins (KRTAP), which are essential for the formation of a rigid and resistant hair shaft through their extensive disulfide bond cross-linking with abundant cysteine residues of hair keratins. The matrix proteins include the high-sulfur and high-glycine-tyrosine keratins. This is Keratin-associated protein 19-5 (KRTAP19-5) from Homo sapiens (Human).